A 971-amino-acid polypeptide reads, in one-letter code: uncharacterized protein (971 aa).

Helical transmembrane passes span 11-31, 516-536, 547-567, 569-589, 615-635, 651-671, 727-747, 763-783, 795-815, 817-837, 878-898, 900-920, and 923-943; these read WLLKIGIILVLAFLGLFGIIF, FASSFIALGVIILLATIALGI, LALALSAISSLAFFSAVGGVV, VFSFVGIFFVVAVNIINLITL, FFTMIETHICWLLSALVVIYL, AITSYFLNYGLGVILVWLFVS, LLFIWLTVLAFGVVMLGLYLG, STGIMLGVGVISLLYLLYSLP, IALILLAAGLFGAMYLANFIF, IDQSTIQLIIFVYLFWLFFQA, IGSSVLILLFIVYAAFNFGGI, GTINLVIFYLIAIVALFSVFV, and LPLFSFGLINGWLSPYNYVQI.

The protein localises to the cell membrane. This is an uncharacterized protein from Mycoplasma pneumoniae (strain ATCC 29342 / M129 / Subtype 1) (Mycoplasmoides pneumoniae).